The following is a 572-amino-acid chain: Periplasmic pectate lyase (572 aa).

The first 23 residues, 1-23 (MKKRALLLSMSVLAMLYIPAGQA), serve as a signal peptide directing secretion.

Belongs to the polysaccharide lyase 2 family.

Its subcellular location is the periplasm. The enzyme catalyses Eliminative cleavage of (1-&gt;4)-alpha-D-galacturonan to give oligosaccharides with 4-deoxy-alpha-D-galact-4-enuronosyl groups at their non-reducing ends.. It functions in the pathway glycan metabolism; pectin degradation; 2-dehydro-3-deoxy-D-gluconate from pectin: step 2/5. The protein is Periplasmic pectate lyase (pelY) of Yersinia pseudotuberculosis serotype I (strain IP32953).